The primary structure comprises 173 residues: Photosystem I assembly protein Ycf3 (173 aa).

TPR repeat units follow at residues 35–68 (AFAYYRDGMSAQADGEYAEALENYQEALTLEEDP), 72–105 (SFILYNIALVHTSNGDHQTALDHYLQALDLNPKM), and 120–153 (GQRSEEAGNDDEAERHYDQAAEYWTQAIRLAPNN).

It belongs to the Ycf3 family.

The protein localises to the cellular thylakoid membrane. Functionally, essential for the assembly of the photosystem I (PSI) complex. May act as a chaperone-like factor to guide the assembly of the PSI subunits. In Synechococcus elongatus (strain ATCC 33912 / PCC 7942 / FACHB-805) (Anacystis nidulans R2), this protein is Photosystem I assembly protein Ycf3.